The chain runs to 357 residues: Geranylgeranyl pyrophosphate synthase spyE (357 aa).

Residues 36 to 60 (EAQSQAVPGTRTETEPTGSSPSDLQ) form a disordered region. A compositionally biased stretch (polar residues) spans 50-59 (EPTGSSPSDL). Isopentenyl diphosphate contacts are provided by K84, R87, and H116. Residues D123 and D127 each coordinate Mg(2+). R132 is a dimethylallyl diphosphate binding site. R133 is an isopentenyl diphosphate binding site. Residues K210, T211, and Q244 each contribute to the dimethylallyl diphosphate site. Mg(2+) is bound at residue D247. The dimethylallyl diphosphate site is built by N251, K261, and K271.

Belongs to the FPP/GGPP synthase family. Mg(2+) serves as cofactor.

It carries out the reaction isopentenyl diphosphate + dimethylallyl diphosphate = (2E)-geranyl diphosphate + diphosphate. The catalysed reaction is isopentenyl diphosphate + (2E)-geranyl diphosphate = (2E,6E)-farnesyl diphosphate + diphosphate. The enzyme catalyses isopentenyl diphosphate + (2E,6E)-farnesyl diphosphate = (2E,6E,10E)-geranylgeranyl diphosphate + diphosphate. It participates in secondary metabolite biosynthesis; terpenoid biosynthesis. Its function is as follows. Geranylgeranyl pyrophosphate synthase; part of the gene cluster that mediates the biosynthesis of meroterpenoids called sartorypyrones. Within the pathway, spyE provides the spyF cosubstrate geranylgeranyl pyrophosphate (GGPP) for the prenylation of triacetic acid lactone (TAL). The biosynthesis of sartorypyrones begins with the production of triacetic acid lactone (TAL) by the NR-PKS spyA using one molecule of acetyl-CoA and two molecules of malonyl-CoA. The prenyltransferase spyF then conjugates geranylgeranyl pyrophosphate (GGPP) to TAL to form geranylgeranyl-triacetate lactone, for which the pathway-specific geranylgeranyl pyrophosphate synthase (GGPS) spyE is required to provide GGPP. Subsequently, geranylgeranyl-triacetate lactone is epoxidized at the terminal olein by the FAD-dependent monooxygenase spyC, followed by cyclization of the terpenoid component catalyzed by the terpene cyclase spyD to produce both the bicyclic sartorypyrone F and the monocyclic sartorypyrone D. Finally, the last step of the biosynthesis involves the acetylation of the meroterpenoids sartorypyrones D and F by the acetyltransferase SpyB to produce sartorypyrones A and G, respectively. The sequence is that of Geranylgeranyl pyrophosphate synthase spyE from Aspergillus fumigatus (strain ATCC MYA-4609 / CBS 101355 / FGSC A1100 / Af293) (Neosartorya fumigata).